A 449-amino-acid chain; its full sequence is Asparagine--tRNA ligase (449 aa).

Belongs to the class-II aminoacyl-tRNA synthetase family. Homodimer.

Its subcellular location is the cytoplasm. It catalyses the reaction tRNA(Asn) + L-asparagine + ATP = L-asparaginyl-tRNA(Asn) + AMP + diphosphate + H(+). The sequence is that of Asparagine--tRNA ligase from Mesomycoplasma hyopneumoniae (strain J / ATCC 25934 / NCTC 10110) (Mycoplasma hyopneumoniae).